Reading from the N-terminus, the 505-residue chain is DNA primase large subunit (505 aa).

The segment at 253–270 is interdomain linker; it reads LSHSYTGQDYSTQKNTGK. Positions 266–503 are interacts with PRIM1; sequence KNTGKISLDQ…LEMDLEGLEE (238 aa). [4Fe-4S] cluster contacts are provided by C287, C367, C384, and C424. The interval 300 to 442 is RNA:DNA duplex binding; that stretch reads HLRHGGRMQY…NVDDCGFSLN (143 aa). Positions 463–486 are disordered; it reads KEISQPETPQHKPSTQKTRDAASA. Residues 467-478 are compositionally biased toward polar residues; sequence QPETPQHKPSTQ. Residue T470 is modified to Phosphothreonine.

It belongs to the eukaryotic-type primase large subunit family. As to quaternary structure, heterodimer of a catalytic subunit PRIM1 and a regulatory subunit PRIM2, also known as the DNA primase complex. Interacts via (C-terminus) with PRIM1. Component of the alpha DNA polymerase complex (also known as the alpha DNA polymerase-primase complex) consisting of four subunits: the catalytic subunit POLA1, the regulatory subunit POLA2, and the primase complex subunits PRIM1 and PRIM2 respectively. Within the complex, POLA1 directly interacts with PRIM2. [4Fe-4S] cluster is required as a cofactor.

Its function is as follows. Regulatory subunit of the DNA primase complex and component of the DNA polymerase alpha complex (also known as the alpha DNA polymerase-primase complex) which play an essential role in the initiation of DNA synthesis. During the S phase of the cell cycle, the DNA polymerase alpha complex (composed of a catalytic subunit POLA1, an accessory subunit POLA2 and two primase subunits, the catalytic subunit PRIM1 and the regulatory subunit PRIM2) is recruited to DNA at the replicative forks via direct interactions with MCM10 and WDHD1. The primase subunit of the polymerase alpha complex initiates DNA synthesis by oligomerising short RNA primers on both leading and lagging strands. These primers are initially extended by the polymerase alpha catalytic subunit and subsequently transferred to polymerase delta and polymerase epsilon for processive synthesis on the lagging and leading strand, respectively. In the primase complex, both subunits are necessary for the initial di-nucleotide formation, but the extension of the primer depends only on the catalytic subunit. Binds RNA:DNA duplex and coordinates the catalytic activities of PRIM1 and POLA2 during primase-to-polymerase switch. The chain is DNA primase large subunit (Prim2) from Mus musculus (Mouse).